The following is a 698-amino-acid chain: Polyphosphate kinase 1 (698 aa).

ATP is bound at residue asparagine 46. Arginine 377 and arginine 407 together coordinate Mg(2+). The active-site Phosphohistidine intermediate is histidine 437. Residues tyrosine 470, arginine 566, and histidine 594 each coordinate ATP.

The protein belongs to the polyphosphate kinase 1 (PPK1) family. Requires Mg(2+) as cofactor. Post-translationally, an intermediate of this reaction is the autophosphorylated ppk in which a phosphate is covalently linked to a histidine residue through a N-P bond.

It catalyses the reaction [phosphate](n) + ATP = [phosphate](n+1) + ADP. Functionally, catalyzes the reversible transfer of the terminal phosphate of ATP to form a long-chain polyphosphate (polyP). In Chlorobaculum tepidum (strain ATCC 49652 / DSM 12025 / NBRC 103806 / TLS) (Chlorobium tepidum), this protein is Polyphosphate kinase 1.